Reading from the N-terminus, the 362-residue chain is Chorismate synthase (362 aa).

Arg-48 is a binding site for NADP(+). FMN-binding positions include 131–133 (RAS), 243–244 (NA), Gly-288, 303–307 (KPTSS), and Arg-329.

The protein belongs to the chorismate synthase family. In terms of assembly, homotetramer. FMNH2 serves as cofactor.

The catalysed reaction is 5-O-(1-carboxyvinyl)-3-phosphoshikimate = chorismate + phosphate. The protein operates within metabolic intermediate biosynthesis; chorismate biosynthesis; chorismate from D-erythrose 4-phosphate and phosphoenolpyruvate: step 7/7. Catalyzes the anti-1,4-elimination of the C-3 phosphate and the C-6 proR hydrogen from 5-enolpyruvylshikimate-3-phosphate (EPSP) to yield chorismate, which is the branch point compound that serves as the starting substrate for the three terminal pathways of aromatic amino acid biosynthesis. This reaction introduces a second double bond into the aromatic ring system. This Bartonella tribocorum (strain CIP 105476 / IBS 506) protein is Chorismate synthase.